A 276-amino-acid polypeptide reads, in one-letter code: Large ribosomal subunit protein uL2 (276 aa).

The segment at 219–276 (TVRGSVMNPNDHPHGGGEGKQPIGRKQQMTPWGKKARGIKTRDKKKASTSMIVRRRNG) is disordered. Residues 252–276 (KKARGIKTRDKKKASTSMIVRRRNG) show a composition bias toward basic residues.

The protein belongs to the universal ribosomal protein uL2 family. Part of the 50S ribosomal subunit. Forms a bridge to the 30S subunit in the 70S ribosome.

Functionally, one of the primary rRNA binding proteins. Required for association of the 30S and 50S subunits to form the 70S ribosome, for tRNA binding and peptide bond formation. It has been suggested to have peptidyltransferase activity; this is somewhat controversial. Makes several contacts with the 16S rRNA in the 70S ribosome. The sequence is that of Large ribosomal subunit protein uL2 from Acholeplasma laidlawii (strain PG-8A).